A 72-amino-acid chain; its full sequence is Translation initiation factor IF-1 (72 aa).

Residues 1 to 72 (MAKSDVIEVD…DKGRITYRYK (72 aa)) form the S1-like domain.

It belongs to the IF-1 family. As to quaternary structure, component of the 30S ribosomal translation pre-initiation complex which assembles on the 30S ribosome in the order IF-2 and IF-3, IF-1 and N-formylmethionyl-tRNA(fMet); mRNA recruitment can occur at any time during PIC assembly.

Its subcellular location is the cytoplasm. Functionally, one of the essential components for the initiation of protein synthesis. Stabilizes the binding of IF-2 and IF-3 on the 30S subunit to which N-formylmethionyl-tRNA(fMet) subsequently binds. Helps modulate mRNA selection, yielding the 30S pre-initiation complex (PIC). Upon addition of the 50S ribosomal subunit IF-1, IF-2 and IF-3 are released leaving the mature 70S translation initiation complex. In Sulfurimonas denitrificans (strain ATCC 33889 / DSM 1251) (Thiomicrospira denitrificans (strain ATCC 33889 / DSM 1251)), this protein is Translation initiation factor IF-1.